A 305-amino-acid polypeptide reads, in one-letter code: Putative S-adenosyl-L-methionine-dependent methyltransferase Mvan_1344 (305 aa).

S-adenosyl-L-methionine-binding positions include Asp130 and 159–160; that span reads DL.

Belongs to the UPF0677 family.

Its function is as follows. Exhibits S-adenosyl-L-methionine-dependent methyltransferase activity. In Mycolicibacterium vanbaalenii (strain DSM 7251 / JCM 13017 / BCRC 16820 / KCTC 9966 / NRRL B-24157 / PYR-1) (Mycobacterium vanbaalenii), this protein is Putative S-adenosyl-L-methionine-dependent methyltransferase Mvan_1344.